A 90-amino-acid polypeptide reads, in one-letter code: U7-theraphotoxin-Hhn1a 6 (90 aa).

The N-terminal stretch at 1-19 is a signal peptide; the sequence is MKTAIFTVVLALAVFAVLS. The propeptide occupies 20-50; sequence FGWEANEKALSEEFTELIHEKEAASEAEARE. Intrachain disulfides connect cysteine 51–cysteine 65, cysteine 58–cysteine 70, and cysteine 64–cysteine 81.

This sequence belongs to the neurotoxin 10 (Hwtx-1) family. 13 (Hntx-13) subfamily. As to expression, expressed by the venom gland.

It localises to the secreted. In terms of biological role, ion channel inhibitor. The sequence is that of U7-theraphotoxin-Hhn1a 6 from Cyriopagopus hainanus (Chinese bird spider).